Here is a 282-residue protein sequence, read N- to C-terminus: Pantothenate synthetase (282 aa).

30 to 37 (MGYLHEGH) provides a ligand contact to ATP. The active-site Proton donor is the H37. Residue Q61 participates in (R)-pantoate binding. Q61 provides a ligand contact to beta-alanine. 147–150 (GMKD) provides a ligand contact to ATP. (R)-pantoate is bound at residue Q153. ATP contacts are provided by residues V176 and 184–187 (KSSR).

It belongs to the pantothenate synthetase family. As to quaternary structure, homodimer.

It is found in the cytoplasm. The catalysed reaction is (R)-pantoate + beta-alanine + ATP = (R)-pantothenate + AMP + diphosphate + H(+). It participates in cofactor biosynthesis; (R)-pantothenate biosynthesis; (R)-pantothenate from (R)-pantoate and beta-alanine: step 1/1. In terms of biological role, catalyzes the condensation of pantoate with beta-alanine in an ATP-dependent reaction via a pantoyl-adenylate intermediate. The polypeptide is Pantothenate synthetase (Bacillus cereus (strain B4264)).